Consider the following 484-residue polypeptide: Acetyl-coenzyme A carboxylase carboxyl transferase subunit beta, chloroplastic (484 aa).

The region spanning 223 to 484 (LWIQCDNCYG…LHAFFPLNKN (262 aa)) is the CoA carboxyltransferase N-terminal domain. Zn(2+)-binding residues include Cys-227, Cys-230, Cys-243, and Cys-246. A C4-type zinc finger spans residues 227 to 246 (CDNCYGLMYKKVKMNVCEQC).

The protein belongs to the AccD/PCCB family. In terms of assembly, acetyl-CoA carboxylase is a heterohexamer composed of biotin carboxyl carrier protein, biotin carboxylase and 2 subunits each of ACCase subunit alpha and ACCase plastid-coded subunit beta (accD). Requires Zn(2+) as cofactor.

It is found in the plastid. The protein resides in the chloroplast stroma. The enzyme catalyses N(6)-carboxybiotinyl-L-lysyl-[protein] + acetyl-CoA = N(6)-biotinyl-L-lysyl-[protein] + malonyl-CoA. Its pathway is lipid metabolism; malonyl-CoA biosynthesis; malonyl-CoA from acetyl-CoA: step 1/1. Its function is as follows. Component of the acetyl coenzyme A carboxylase (ACC) complex. Biotin carboxylase (BC) catalyzes the carboxylation of biotin on its carrier protein (BCCP) and then the CO(2) group is transferred by the transcarboxylase to acetyl-CoA to form malonyl-CoA. The sequence is that of Acetyl-coenzyme A carboxylase carboxyl transferase subunit beta, chloroplastic from Crucihimalaya wallichii (Rock-cress).